Reading from the N-terminus, the 801-residue chain is Phenylalanine--tRNA ligase beta subunit (801 aa).

A tRNA-binding domain is found at 39–147 (GGGLDEVVVA…TDLPLGVPVF (109 aa)). Residues 401 to 477 (LPRRTVRFRV…RLNGYNNIPV (77 aa)) enclose the B5 domain. The Mg(2+) site is built by Asp-455, Asp-461, Glu-464, and Glu-465. The FDX-ACB domain maps to 708–801 (SRFPDTFRDI…LVKKLAVTIR (94 aa)).

It belongs to the phenylalanyl-tRNA synthetase beta subunit family. Type 1 subfamily. Tetramer of two alpha and two beta subunits. The cofactor is Mg(2+).

It is found in the cytoplasm. It catalyses the reaction tRNA(Phe) + L-phenylalanine + ATP = L-phenylalanyl-tRNA(Phe) + AMP + diphosphate + H(+). The protein is Phenylalanine--tRNA ligase beta subunit of Geobacter metallireducens (strain ATCC 53774 / DSM 7210 / GS-15).